The following is a 218-amino-acid chain: Recombination protein RecR (218 aa).

The segment at 56 to 71 (CRICCNISRDEVCRIC) adopts a C4-type zinc-finger fold. In terms of domain architecture, Toprim spans 79-195 (GLICVVEEPK…VVSRLASGMP (117 aa)).

Belongs to the RecR family.

In terms of biological role, may play a role in DNA repair. It seems to be involved in an RecBC-independent recombinational process of DNA repair. It may act with RecF and RecO. This Corynebacterium efficiens (strain DSM 44549 / YS-314 / AJ 12310 / JCM 11189 / NBRC 100395) protein is Recombination protein RecR.